The sequence spans 643 residues: Threonine--tRNA ligase (643 aa).

The TGS domain maps to 1-61; that stretch reads MPIITLPDGS…TEDSKLEIIT (61 aa). Residues 243-534 form a catalytic region; it reads DHRKIGKALD…ITEEYAGFFP (292 aa). 3 residues coordinate Zn(2+): Cys334, His385, and His511.

It belongs to the class-II aminoacyl-tRNA synthetase family. Homodimer. Zn(2+) serves as cofactor.

It is found in the cytoplasm. It carries out the reaction tRNA(Thr) + L-threonine + ATP = L-threonyl-tRNA(Thr) + AMP + diphosphate + H(+). Functionally, catalyzes the attachment of threonine to tRNA(Thr) in a two-step reaction: L-threonine is first activated by ATP to form Thr-AMP and then transferred to the acceptor end of tRNA(Thr). Also edits incorrectly charged L-seryl-tRNA(Thr). The protein is Threonine--tRNA ligase of Pasteurella multocida (strain Pm70).